A 454-amino-acid polypeptide reads, in one-letter code: Chromosomal replication initiator protein DnaA (454 aa).

Positions 1–77 (MASLNENQKF…GFEVFGRMID (77 aa)) are domain I, interacts with DnaA modulators. The domain II stretch occupies residues 77 to 115 (DYELYANDELTDIELRRLNNQSPVDEPLSVAKPTSPLVS). The interval 116–332 (GLNEKYNFEN…GALNRVEFVA (217 aa)) is domain III, AAA+ region. ATP is bound by residues glycine 160, glycine 162, lysine 163, and threonine 164. Residues 333 to 454 (RANGISIVDI…KDIDSIKRKF (122 aa)) form a domain IV, binds dsDNA region.

Belongs to the DnaA family. Oligomerizes as a right-handed, spiral filament on DNA at oriC.

The protein localises to the cytoplasm. Plays an essential role in the initiation and regulation of chromosomal replication. ATP-DnaA binds to the origin of replication (oriC) to initiate formation of the DNA replication initiation complex once per cell cycle. Binds the DnaA box (a 9 base pair repeat at the origin) and separates the double-stranded (ds)DNA. Forms a right-handed helical filament on oriC DNA; dsDNA binds to the exterior of the filament while single-stranded (ss)DNA is stabiized in the filament's interior. The ATP-DnaA-oriC complex binds and stabilizes one strand of the AT-rich DNA unwinding element (DUE), permitting loading of DNA polymerase. After initiation quickly degrades to an ADP-DnaA complex that is not apt for DNA replication. Binds acidic phospholipids. This chain is Chromosomal replication initiator protein DnaA, found in Lactococcus lactis subsp. cremoris (strain MG1363).